The following is a 267-amino-acid chain: Chlorophyll a-b binding protein 3B, chloroplastic (267 aa).

The N-terminal 34 residues, 1-34 (MAASTMALSSSTFAGKAVKLSPSSSEISGNGRIT), are a transit peptide targeting the chloroplast. The tract at residues 19-52 (KLSPSSSEISGNGRITMRKTAAKPKPASSGSPWX) is disordered. A helical transmembrane segment spans residues 153–173 (LVHAQSILAIWACQVVLMGAV). Residues valine 154, serine 158, glutamine 166, glutamate 174, arginine 177, and leucine 183 each coordinate chlorophyll b. Chlorophyll a-binding residues include lysine 214, glutamate 215, asparagine 218, arginine 220, glutamine 232, histidine 247, and alanine 256. A helical membrane pass occupies residues 221-241 (LAMFSMFGFFVQAIVTGKGPL). Phenylalanine 263 is a binding site for chlorophyll b.

Belongs to the light-harvesting chlorophyll a/b-binding (LHC) protein family. The LHC complex consists of chlorophyll a-b binding proteins. The cofactor is Binds at least 14 chlorophylls (8 Chl-a and 6 Chl-b) and carotenoids such as lutein and neoxanthin.. Photoregulated by reversible phosphorylation of its threonine residues.

The protein resides in the plastid. The protein localises to the chloroplast thylakoid membrane. Functionally, the light-harvesting complex (LHC) functions as a light receptor, it captures and delivers excitation energy to photosystems with which it is closely associated. The sequence is that of Chlorophyll a-b binding protein 3B, chloroplastic (CAB3B) from Solanum lycopersicum (Tomato).